Consider the following 190-residue polypeptide: Probable calcium-binding protein CML27 (190 aa).

EF-hand domains follow at residues 27–62 (LNAL…LGLG), 115–150 (DDEG…LGLP), and 153–188 (RNLA…ITVW). Positions 40, 42, 44, 46, 51, 128, 130, 132, 139, 166, 168, 170, 172, and 177 each coordinate Ca(2+).

Its function is as follows. Potential calcium sensor. The sequence is that of Probable calcium-binding protein CML27 (CML27) from Oryza sativa subsp. japonica (Rice).